The chain runs to 205 residues: dITP/XTP pyrophosphatase (205 aa).

Residue 10–15 coordinates substrate; that stretch reads TKNEGK. Residues Glu44 and Asp73 each coordinate Mg(2+). Residue Asp73 is the Proton acceptor of the active site. Substrate contacts are provided by residues Ser74, 156–159, Lys179, and 184–185; these read FGYD and HR.

The protein belongs to the HAM1 NTPase family. In terms of assembly, homodimer. Mg(2+) is required as a cofactor.

It catalyses the reaction XTP + H2O = XMP + diphosphate + H(+). It carries out the reaction dITP + H2O = dIMP + diphosphate + H(+). The catalysed reaction is ITP + H2O = IMP + diphosphate + H(+). Pyrophosphatase that catalyzes the hydrolysis of nucleoside triphosphates to their monophosphate derivatives, with a high preference for the non-canonical purine nucleotides XTP (xanthosine triphosphate), dITP (deoxyinosine triphosphate) and ITP. Seems to function as a house-cleaning enzyme that removes non-canonical purine nucleotides from the nucleotide pool, thus preventing their incorporation into DNA/RNA and avoiding chromosomal lesions. This is dITP/XTP pyrophosphatase from Dictyoglomus thermophilum (strain ATCC 35947 / DSM 3960 / H-6-12).